An 81-amino-acid polypeptide reads, in one-letter code: Photosystem I iron-sulfur center (81 aa).

4Fe-4S ferredoxin-type domains are found at residues 2 to 31 (AHIV…MVPW) and 39 to 68 (MASA…VRVY). [4Fe-4S] cluster is bound by residues Cys11, Cys14, Cys17, Cys21, Cys48, Cys51, Cys54, and Cys58.

In terms of assembly, the eukaryotic PSI reaction center is composed of at least 11 subunits. Requires [4Fe-4S] cluster as cofactor.

The protein localises to the plastid. The protein resides in the chloroplast thylakoid membrane. It carries out the reaction reduced [plastocyanin] + hnu + oxidized [2Fe-2S]-[ferredoxin] = oxidized [plastocyanin] + reduced [2Fe-2S]-[ferredoxin]. In terms of biological role, apoprotein for the two 4Fe-4S centers FA and FB of photosystem I (PSI); essential for photochemical activity. FB is the terminal electron acceptor of PSI, donating electrons to ferredoxin. The C-terminus interacts with PsaA/B/D and helps assemble the protein into the PSI complex. Required for binding of PsaD and PsaE to PSI. PSI is a plastocyanin/cytochrome c6-ferredoxin oxidoreductase, converting photonic excitation into a charge separation, which transfers an electron from the donor P700 chlorophyll pair to the spectroscopically characterized acceptors A0, A1, FX, FA and FB in turn. This Chlamydomonas reinhardtii (Chlamydomonas smithii) protein is Photosystem I iron-sulfur center.